The chain runs to 124 residues: Small ribosomal subunit protein uS13 (124 aa).

Residues 95–124 (GLPVRGQRTKTNARTRKGPKRTIAGKKKAR) are disordered.

This sequence belongs to the universal ribosomal protein uS13 family. In terms of assembly, part of the 30S ribosomal subunit. Forms a loose heterodimer with protein S19. Forms two bridges to the 50S subunit in the 70S ribosome.

Functionally, located at the top of the head of the 30S subunit, it contacts several helices of the 16S rRNA. In the 70S ribosome it contacts the 23S rRNA (bridge B1a) and protein L5 of the 50S subunit (bridge B1b), connecting the 2 subunits; these bridges are implicated in subunit movement. Contacts the tRNAs in the A and P-sites. This is Small ribosomal subunit protein uS13 from Mycolicibacterium smegmatis (strain ATCC 700084 / mc(2)155) (Mycobacterium smegmatis).